Reading from the N-terminus, the 359-residue chain is MKPSIYSLTRDELIAWAVERGQKQFRATQIWDWLYKKRVQSFEEMTNISKDFVPILNDSFCVNPLKQRVVQESADGTVKYLFELPDGMLIETVLMRQHYGHSVCVTTQVGCNIGCTFCASGLIKKQRDLNSGEITAQIMLVQKYFDDRKQGERVSHVVVMGIGEPFDNYKNVMCFLRVINDDNGLAIGARHITVSTSGLAHKIRDFANEGVQVNLAVSLHAPNNDLRSSIMRVNRSFPLEKLFSAIEYYIEKTNRRVTFEYIMLNEVNDSIKQAQELADLTKTIRKLSYVNLIPYNPVSEHDQYSRSPKERVLAFYDVLKKNGVNCVVRQEHGTDIDAACGQLRSKTMKKDREKVTATK.

E91 (proton acceptor) is an active-site residue. Positions 97 to 329 (QHYGHSVCVT…KKNGVNCVVR (233 aa)) constitute a Radical SAM core domain. C104 and C340 are disulfide-bonded. C111, C115, and C118 together coordinate [4Fe-4S] cluster. Residues 163–164 (GE), S195, 218–220 (SLH), and N296 contribute to the S-adenosyl-L-methionine site. The active-site S-methylcysteine intermediate is C340.

This sequence belongs to the radical SAM superfamily. RlmN family. [4Fe-4S] cluster serves as cofactor.

The protein localises to the cytoplasm. The catalysed reaction is adenosine(2503) in 23S rRNA + 2 reduced [2Fe-2S]-[ferredoxin] + 2 S-adenosyl-L-methionine = 2-methyladenosine(2503) in 23S rRNA + 5'-deoxyadenosine + L-methionine + 2 oxidized [2Fe-2S]-[ferredoxin] + S-adenosyl-L-homocysteine. It carries out the reaction adenosine(37) in tRNA + 2 reduced [2Fe-2S]-[ferredoxin] + 2 S-adenosyl-L-methionine = 2-methyladenosine(37) in tRNA + 5'-deoxyadenosine + L-methionine + 2 oxidized [2Fe-2S]-[ferredoxin] + S-adenosyl-L-homocysteine. Specifically methylates position 2 of adenine 2503 in 23S rRNA and position 2 of adenine 37 in tRNAs. The chain is Probable dual-specificity RNA methyltransferase RlmN from Streptococcus pyogenes serotype M18 (strain MGAS8232).